Consider the following 257-residue polypeptide: MGRVIRGQRKGAGSVFKAHVKHRKGAAKLRHIDFAERHGYIKGIVKDIIHDPGRGAPLAKVMFRDPYRFKKRTELFIAAEGIHTGQFIYCGKKAQLNIGNVLPVGTMPEGTIVCCLEEKPGDRGKLARASGNYATVISHNPETKKSRVKLPSGSKKVISSANRAVVGVVAGGGRIDKPILKAGRAYHKYKAKRNCWPRVRGVAMNPVEHPFGGGNHQHIGKPSTIRRDAPAGRKVGLIAARRTGRLRGTKTVQDKEN.

The disordered stretch occupies residues 207 to 230 (VEHPFGGGNHQHIGKPSTIRRDAP).

This sequence belongs to the universal ribosomal protein uL2 family. As to quaternary structure, component of the large ribosomal subunit.

The protein localises to the cytoplasm. In terms of biological role, component of the large ribosomal subunit. The ribosome is a large ribonucleoprotein complex responsible for the synthesis of proteins in the cell. The chain is Large ribosomal subunit protein uL2 (rpl8) from Danio rerio (Zebrafish).